Here is a 249-residue protein sequence, read N- to C-terminus: Cytochrome c oxidase subunit 2 (249 aa).

Positions 1 to 13 are cleaved as a signal peptide; sequence MLNLFQIMNMINN. At 14-40 the chain is on the mitochondrial intermembrane side; that stretch reads DVPTPYGFYFQDSATPNQEGILELHDN. The chain crosses the membrane as a helical span at residues 41–62; that stretch reads IMFYLVVILGLVSWMLFTIVRT. Topologically, residues 63 to 80 are mitochondrial matrix; it reads YSRNPMAYKYIKHGQTIE. The chain crosses the membrane as a helical span at residues 81 to 105; it reads IIWKIFPAVILLTIAFPSFILLYLC. Residues 106–249 lie on the Mitochondrial intermembrane side of the membrane; sequence DEVISPAMTI…PKFLEWLNEQ (144 aa). The Cu cation site is built by His-184, Cys-219, Glu-221, Cys-223, His-227, and Met-230. Glu-221 is a binding site for Mg(2+).

It belongs to the cytochrome c oxidase subunit 2 family. In terms of assembly, component of the cytochrome c oxidase (complex IV, CIV), a multisubunit enzyme composed of a catalytic core of 3 subunits and several supernumerary subunits. The complex exists as a monomer or a dimer and forms supercomplexes (SCs) in the inner mitochondrial membrane with ubiquinol-cytochrome c oxidoreductase (cytochrome b-c1 complex, complex III, CIII). It depends on Cu cation as a cofactor. The signal sequence of COX2 is processed by IMP1.

The protein resides in the mitochondrion inner membrane. It catalyses the reaction 4 Fe(II)-[cytochrome c] + O2 + 8 H(+)(in) = 4 Fe(III)-[cytochrome c] + 2 H2O + 4 H(+)(out). Functionally, component of the cytochrome c oxidase, the last enzyme in the mitochondrial electron transport chain which drives oxidative phosphorylation. The respiratory chain contains 3 multisubunit complexes succinate dehydrogenase (complex II, CII), ubiquinol-cytochrome c oxidoreductase (cytochrome b-c1 complex, complex III, CIII) and cytochrome c oxidase (complex IV, CIV), that cooperate to transfer electrons derived from NADH and succinate to molecular oxygen, creating an electrochemical gradient over the inner membrane that drives transmembrane transport and the ATP synthase. Cytochrome c oxidase is the component of the respiratory chain that catalyzes the reduction of oxygen to water. Electrons originating from reduced cytochrome c in the intermembrane space (IMS) are transferred via the dinuclear copper A center (CU(A)) of subunit 2 and heme A of subunit 1 to the active site in subunit 1, a binuclear center (BNC) formed by heme A3 and copper B (CU(B)). The BNC reduces molecular oxygen to 2 water molecules using 4 electrons from cytochrome c in the IMS and 4 protons from the mitochondrial matrix. The protein is Cytochrome c oxidase subunit 2 (COX2) of Maudiozyma exigua (Yeast).